The following is a 415-amino-acid chain: Glucose-1-phosphate adenylyltransferase (415 aa).

Alpha-D-glucose 1-phosphate contacts are provided by residues Tyr98, Gly163, 178–179 (EK), and Ser189.

The protein belongs to the bacterial/plant glucose-1-phosphate adenylyltransferase family. Homotetramer.

It catalyses the reaction alpha-D-glucose 1-phosphate + ATP + H(+) = ADP-alpha-D-glucose + diphosphate. It functions in the pathway glycan biosynthesis; glycogen biosynthesis. Involved in the biosynthesis of ADP-glucose, a building block required for the elongation reactions to produce glycogen. Catalyzes the reaction between ATP and alpha-D-glucose 1-phosphate (G1P) to produce pyrophosphate and ADP-Glc. The polypeptide is Glucose-1-phosphate adenylyltransferase (Fervidobacterium nodosum (strain ATCC 35602 / DSM 5306 / Rt17-B1)).